The sequence spans 221 residues: Oxaloacetate tautomerase FAHD1, mitochondrial (221 aa).

The N-terminal 24 residues, 1–24 (MAASRPLSRFWEWGKNIVCVGRNY), are a transit peptide targeting the mitochondrion. R22 contributes to the oxalate binding site. S37 is modified (phosphoserine). Mg(2+) contacts are provided by E68, E70, and D99. K110 is subject to N6-acetyllysine. The residue at position 112 (K112) is an N6-succinyllysine. The oxalate site is built by K120 and T189.

It belongs to the FAH family. In terms of assembly, homodimer. Mg(2+) is required as a cofactor. The cofactor is Mn(2+). Ubiquitous (at protein level).

It is found in the mitochondrion. The protein localises to the cytoplasm. Its subcellular location is the cytosol. It catalyses the reaction oxaloacetate = enol-oxaloacetate. It carries out the reaction oxaloacetate + H(+) = pyruvate + CO2. The enzyme catalyses a 3-acylpyruvate + H2O = a carboxylate + pyruvate + H(+). The catalysed reaction is acetylpyruvate + H2O = acetate + pyruvate + H(+). It catalyses the reaction 3-fumarylpyruvate + H2O = fumarate + pyruvate + H(+). Its activity is regulated as follows. Oxaloacetate decarboxylation is competitively inhibited by oxalate. Functionally, tautomerase that converts enol-oxaloacetate, a strong inhibitor of succinate dehydrogenase, to the physiological keto form of oxaloacetate. It is thereby required to maximize aerobic respiration efficiency by preventing succinate dehydrogenase inhibition. Also acts as a weak oxaloacetate decarboxylase (ODx), catalyzing the decarboxylation of oxaloacetate (OAA) to pyruvate and CO(2), and as such is likely a regulatory enzyme in the TCA cycle. Also displays acylpyruvase activity, being able to hydrolyze acetylpyruvate and fumarylpyruvate in vitro. Exhibits only a weak hydrolase activity on methylacetopyruvate and acetylacetone, and no activity toward acetoacetyl-CoA. This chain is Oxaloacetate tautomerase FAHD1, mitochondrial, found in Homo sapiens (Human).